Here is a 139-residue protein sequence, read N- to C-terminus: D-ribose pyranase (139 aa).

H20 functions as the Proton donor in the catalytic mechanism. Residues D28, H106, and 128–130 (YAN) contribute to the substrate site.

The protein belongs to the RbsD / FucU family. RbsD subfamily. As to quaternary structure, homodecamer.

The protein localises to the cytoplasm. The catalysed reaction is beta-D-ribopyranose = beta-D-ribofuranose. Its pathway is carbohydrate metabolism; D-ribose degradation; D-ribose 5-phosphate from beta-D-ribopyranose: step 1/2. Catalyzes the interconversion of beta-pyran and beta-furan forms of D-ribose. This Shewanella pealeana (strain ATCC 700345 / ANG-SQ1) protein is D-ribose pyranase.